The sequence spans 312 residues: tRNA uridine(34) hydroxylase (312 aa).

A Rhodanese domain is found at 147-237 (SDRNVIFIDM…GILGYVHDAN (91 aa)). The active-site Cysteine persulfide intermediate is C201.

This sequence belongs to the TrhO family.

The catalysed reaction is uridine(34) in tRNA + AH2 + O2 = 5-hydroxyuridine(34) in tRNA + A + H2O. Functionally, catalyzes oxygen-dependent 5-hydroxyuridine (ho5U) modification at position 34 in tRNAs. The protein is tRNA uridine(34) hydroxylase of Buchnera aphidicola subsp. Schizaphis graminum (strain Sg).